Reading from the N-terminus, the 699-residue chain is Homeobox-leucine zipper protein HDG8 (699 aa).

The interval 1 to 31 (MDNNGGGSSGNEQYTSGDAKQNGKRTCHRHT) is disordered. The span at 10-19 (GNEQYTSGDA) shows a compositional bias: polar residues. The span at 22–31 (NGKRTCHRHT) shows a compositional bias: basic residues. A DNA-binding region (homeobox) is located at residues 23 to 82 (GKRTCHRHTPQQIQRLEAYFKECPHPDERQRNQLCRELKLEPDQIKFWFQNKRTQSKTQE). Residues 89 to 149 (LLRGENETLQ…LKDHRDRISN (61 aa)) are a coiled coil. The 235-residue stretch at 204–438 (AETDMSLLSE…LERMCERMAL (235 aa)) folds into the START domain.

Belongs to the HD-ZIP homeobox family. Class IV subfamily. Interacts with ANT. Expressed in the embryo at early stage and in the endosperm.

It is found in the nucleus. Functionally, probable transcription factor. This Arabidopsis thaliana (Mouse-ear cress) protein is Homeobox-leucine zipper protein HDG8.